The sequence spans 312 residues: Protein lon-1 (312 aa).

The N-terminal stretch at 1-18 (MNYLLTALIALLAPISVA) is a signal peptide. One can recognise an SCP domain in the interval 87–209 (EHNRYRRMVP…GHRNVFVCHY (123 aa)). N-linked (GlcNAc...) asparagine glycosylation is present at N142. The segment covering 265 to 284 (TTTTESTTTSTTTEEPTTTC) has biased composition (low complexity). The interval 265–312 (TTTTESTTTSTTTEEPTTTCEPDEPEAEGADNNQEEEEENNDGFRMRV) is disordered. A compositionally biased stretch (acidic residues) spans 285 to 305 (EPDEPEAEGADNNQEEEEENN).

It belongs to the CRISP family. As to expression, expressed in hypodermal tissues.

Regulates body size morphogenesis, but does not affect male tail development. This Caenorhabditis elegans protein is Protein lon-1 (lon-1).